Here is a 219-residue protein sequence, read N- to C-terminus: PKHD-type hydroxylase Mmar10_1675 (219 aa).

The region spanning 77-171 is the Fe2OG dioxygenase domain; that stretch reads TLSRILVSRY…RVAVVGWVRS (95 aa). Fe cation contacts are provided by histidine 95, aspartate 97, and histidine 152. Arginine 162 provides a ligand contact to 2-oxoglutarate.

It depends on Fe(2+) as a cofactor. Requires L-ascorbate as cofactor.

The chain is PKHD-type hydroxylase Mmar10_1675 from Maricaulis maris (strain MCS10) (Caulobacter maris).